Consider the following 256-residue polypeptide: Thiazole synthase (256 aa).

The active-site Schiff-base intermediate with DXP is Lys-96. 1-deoxy-D-xylulose 5-phosphate is bound by residues Gly-157, 183 to 184, and 205 to 206; these read AG and NT.

Belongs to the ThiG family. As to quaternary structure, homotetramer. Forms heterodimers with either ThiH or ThiS.

The protein localises to the cytoplasm. It catalyses the reaction [ThiS sulfur-carrier protein]-C-terminal-Gly-aminoethanethioate + 2-iminoacetate + 1-deoxy-D-xylulose 5-phosphate = [ThiS sulfur-carrier protein]-C-terminal Gly-Gly + 2-[(2R,5Z)-2-carboxy-4-methylthiazol-5(2H)-ylidene]ethyl phosphate + 2 H2O + H(+). Its pathway is cofactor biosynthesis; thiamine diphosphate biosynthesis. In terms of biological role, catalyzes the rearrangement of 1-deoxy-D-xylulose 5-phosphate (DXP) to produce the thiazole phosphate moiety of thiamine. Sulfur is provided by the thiocarboxylate moiety of the carrier protein ThiS. In vitro, sulfur can be provided by H(2)S. The polypeptide is Thiazole synthase (Bacillus mycoides (strain KBAB4) (Bacillus weihenstephanensis)).